A 453-amino-acid polypeptide reads, in one-letter code: MRLCVIGAGYVGLVTAACFAEMGNQVRCVERDRERVARLRRGEMPIYEPGLESILRDQLDAARLTFTASLAEGLADAEVVFIAVGTPCGEDGSADLSHVLAVAEQLGAQLRQACIVVNKSTVPVGTAERVEEIIRLGLARRRKRFRVAVASNPEFLKEGSAVDDFRRPDRVIIGSAETQAGETLRQLYAPFLRNHERVLLMGRREAEFSKYAANAFLATKISFMNEMAGLCALTGVDIEDVRRGMGSDKRIGTHFIYAGCGYGGSCFPKDVRALIRSAEQQGYDSQILRAVEARNARQKELLFETLGELFQGRWQGRTVALWGLAFKPGTDDLREAPSLVLLEALLRHGVRVRAHDPVANAGVAARYPEAVACARLTLHDSPYAAVEGADALVLVTEWKQFRQPDFQKIRGSMRTPLLVDGRNLYAPARMAELGFIYQGIGRPRAGHCKASAA.

NAD(+)-binding positions include 2–19 (RLCV…AACF), Val11, Thr121, and Glu158. Substrate-binding positions include 154–158 (EFLKE), Lys210, Asn214, 255–259 (FIYAG), and Gly263. Catalysis depends on Cys266, which acts as the Nucleophile. Position 269 (Lys269) interacts with NAD(+). Position 327 (Lys327) interacts with substrate. Arg334 lines the NAD(+) pocket.

This sequence belongs to the UDP-glucose/GDP-mannose dehydrogenase family.

It catalyses the reaction UDP-alpha-D-glucose + 2 NAD(+) + H2O = UDP-alpha-D-glucuronate + 2 NADH + 3 H(+). It participates in nucleotide-sugar biosynthesis; UDP-alpha-D-glucuronate biosynthesis; UDP-alpha-D-glucuronate from UDP-alpha-D-glucose: step 1/1. The protein operates within bacterial outer membrane biogenesis; lipopolysaccharide biosynthesis. In Pseudomonas aeruginosa (strain ATCC 15692 / DSM 22644 / CIP 104116 / JCM 14847 / LMG 12228 / 1C / PRS 101 / PAO1), this protein is UDP-glucose 6-dehydrogenase (udg).